A 390-amino-acid polypeptide reads, in one-letter code: Zinc transporter 7-B (390 aa).

Topologically, residues 1–37 are cytoplasmic; it reads MLPLSIKDDEYKPPKFNLVRKVSGWIRSIFSDSTSRN. The chain crosses the membrane as a helical span at residues 38-58; that stretch reads LFCFLCLNLSFAFVELFYGIW. Residues 59 to 67 lie on the Lumenal side of the membrane; sequence SNSLGLISD. The helical transmembrane segment at 68 to 88 threads the bilayer; that stretch reads SFHMFFDCTALLAGLAASVIS. Residues 89–102 lie on the Cytoplasmic side of the membrane; sequence RWKTNETFSYGYVR. Residues 103 to 123 traverse the membrane as a helical segment; sequence AEVLAGFVNGLFLIFTAFFIF. Topologically, residues 124–140 are lumenal; the sequence is SEGIERALDTPEVHHER. A helical membrane pass occupies residues 141–161; sequence LLPVSIMGFLVNLIGIFVFQH. The interval 161–226 is his-rich loop; the sequence is HGGGHGHSHE…GHDHSHKHGH (66 aa). At 162 to 250 the chain is on the cytoplasmic side; that stretch reads GGGHGHSHES…KGSSKQILEG (89 aa). A disordered region spans residues 166–243; the sequence is GHSHESGHGH…DEPPEENKGS (78 aa). Residues 187–201 show a composition bias toward basic residues; that stretch reads GHSHSHGGGHGHSHG. Composition is skewed to basic and acidic residues over residues 202–218 and 232–242; these read GGHEHGHSHGGGHEHGH and CHDEPPEENKG. Residues 251–271 form a helical membrane-spanning segment; that stretch reads VFLHIVADALGSVGVIISTIL. Over 272–276 the chain is Lumenal; it reads MQQYG. The helical transmembrane segment at 277–297 threads the bilayer; the sequence is LMIADPICSMLIALLIFVSVI. Residues 298-390 are Cytoplasmic-facing; that stretch reads PLLKQSIGIL…LYVQIDLAAM (93 aa).

Belongs to the cation diffusion facilitator (CDF) transporter (TC 2.A.4) family. SLC30A subfamily. Homooligomer.

The protein localises to the golgi apparatus membrane. The protein resides in the cytoplasmic vesicle. Its subcellular location is the golgi apparatus. It is found in the trans-Golgi network. It localises to the sarcoplasmic reticulum. The protein localises to the mitochondrion. It catalyses the reaction Zn(2+)(in) = Zn(2+)(out). Its function is as follows. Zinc ion transporter mediating zinc entry from the cytosol into the lumen of organelles along the secretory pathway. By contributing to zinc ion homeostasis within the early secretory pathway, regulates the activation and folding of enzymes like alkaline phosphatases. The polypeptide is Zinc transporter 7-B (slc30a7-b) (Xenopus laevis (African clawed frog)).